A 356-amino-acid polypeptide reads, in one-letter code: Dual-specificity RNA methyltransferase RlmN (356 aa).

E89 serves as the catalytic Proton acceptor. The Radical SAM core domain occupies 108–341 (KHARYTICVS…CTIRESKGLD (234 aa)). C115 and C346 are disulfide-bonded. [4Fe-4S] cluster-binding residues include C122, C126, and C129. S-adenosyl-L-methionine-binding positions include 172–173 (GE), S204, 227–229 (SLH), and N303. C346 (S-methylcysteine intermediate) is an active-site residue.

This sequence belongs to the radical SAM superfamily. RlmN family. Requires [4Fe-4S] cluster as cofactor.

It is found in the cytoplasm. It carries out the reaction adenosine(2503) in 23S rRNA + 2 reduced [2Fe-2S]-[ferredoxin] + 2 S-adenosyl-L-methionine = 2-methyladenosine(2503) in 23S rRNA + 5'-deoxyadenosine + L-methionine + 2 oxidized [2Fe-2S]-[ferredoxin] + S-adenosyl-L-homocysteine. The catalysed reaction is adenosine(37) in tRNA + 2 reduced [2Fe-2S]-[ferredoxin] + 2 S-adenosyl-L-methionine = 2-methyladenosine(37) in tRNA + 5'-deoxyadenosine + L-methionine + 2 oxidized [2Fe-2S]-[ferredoxin] + S-adenosyl-L-homocysteine. Specifically methylates position 2 of adenine 2503 in 23S rRNA and position 2 of adenine 37 in tRNAs. m2A2503 modification seems to play a crucial role in the proofreading step occurring at the peptidyl transferase center and thus would serve to optimize ribosomal fidelity. The polypeptide is Dual-specificity RNA methyltransferase RlmN (Campylobacter lari (strain RM2100 / D67 / ATCC BAA-1060)).